The sequence spans 396 residues: Elongation factor Tu (396 aa).

Residues 10–205 (KPHVNIGTIG…AVDESIPDPV (196 aa)) enclose the tr-type G domain. A G1 region spans residues 19-26 (GHVDHGKT). 19 to 26 (GHVDHGKT) is a GTP binding site. Threonine 26 is a Mg(2+) binding site. The segment at 62-66 (GITIN) is G2. The G3 stretch occupies residues 83-86 (DAPG). GTP-binding positions include 83 to 87 (DAPGH) and 138 to 141 (NKAD). The tract at residues 138-141 (NKAD) is G4. Residues 175–177 (SAL) are G5.

The protein belongs to the TRAFAC class translation factor GTPase superfamily. Classic translation factor GTPase family. EF-Tu/EF-1A subfamily. In terms of assembly, monomer.

The protein resides in the cytoplasm. It catalyses the reaction GTP + H2O = GDP + phosphate + H(+). Functionally, GTP hydrolase that promotes the GTP-dependent binding of aminoacyl-tRNA to the A-site of ribosomes during protein biosynthesis. The polypeptide is Elongation factor Tu (Mycobacterium sp. (strain JLS)).